Consider the following 216-residue polypeptide: Protein Syd (216 aa).

The protein belongs to the Syd family.

It is found in the cell inner membrane. In terms of biological role, interacts with the SecY protein in vivo. May bind preferentially to an uncomplexed state of SecY, thus functioning either as a chelating agent for excess SecY in the cell or as a regulatory factor that negatively controls the translocase function. This is Protein Syd from Shewanella sp. (strain MR-7).